The following is a 259-amino-acid chain: MDSLRLGTYTFSSRLILGTGKFSSTSAMIKAVRASGTQLVTVALRRFNREQAEDDLFGPLSEIEGLTLMPNTSGAATAKEAIKAAHIARELSGSPFIKVEIHPNPHHLMPDPIETWEACKILAAEGFIVMPYIPADPVLAKRLEEVGCSSVMPLGSAIGSGQGLSTAEMVKIIIRESSVPVIVDAGLRSPSEACAAMEMGCEAVLVNSAVAVARDPAAMALAFAKAVEAGFEARNAGLMPRSGSAVATSPLTSFLGATR.

The active-site Schiff-base intermediate with DXP is the lysine 98. 1-deoxy-D-xylulose 5-phosphate-binding positions include glycine 159, 185 to 186, and 207 to 208; these read AG and NS.

This sequence belongs to the ThiG family. In terms of assembly, homotetramer. Forms heterodimers with either ThiH or ThiS.

It is found in the cytoplasm. It catalyses the reaction [ThiS sulfur-carrier protein]-C-terminal-Gly-aminoethanethioate + 2-iminoacetate + 1-deoxy-D-xylulose 5-phosphate = [ThiS sulfur-carrier protein]-C-terminal Gly-Gly + 2-[(2R,5Z)-2-carboxy-4-methylthiazol-5(2H)-ylidene]ethyl phosphate + 2 H2O + H(+). Its pathway is cofactor biosynthesis; thiamine diphosphate biosynthesis. In terms of biological role, catalyzes the rearrangement of 1-deoxy-D-xylulose 5-phosphate (DXP) to produce the thiazole phosphate moiety of thiamine. Sulfur is provided by the thiocarboxylate moiety of the carrier protein ThiS. In vitro, sulfur can be provided by H(2)S. This is Thiazole synthase from Chlorobaculum tepidum (strain ATCC 49652 / DSM 12025 / NBRC 103806 / TLS) (Chlorobium tepidum).